Reading from the N-terminus, the 432-residue chain is Glutamyl-tRNA reductase (432 aa).

Residues 55-58 (TCNR), Ser-114, 119-121 (ETQ), and Gln-125 contribute to the substrate site. The Nucleophile role is filled by Cys-56. Residue 194 to 199 (GAGEMI) coordinates NADP(+).

The protein belongs to the glutamyl-tRNA reductase family. In terms of assembly, homodimer.

It catalyses the reaction (S)-4-amino-5-oxopentanoate + tRNA(Glu) + NADP(+) = L-glutamyl-tRNA(Glu) + NADPH + H(+). Its pathway is porphyrin-containing compound metabolism; protoporphyrin-IX biosynthesis; 5-aminolevulinate from L-glutamyl-tRNA(Glu): step 1/2. Functionally, catalyzes the NADPH-dependent reduction of glutamyl-tRNA(Glu) to glutamate 1-semialdehyde (GSA). This Burkholderia multivorans (strain ATCC 17616 / 249) protein is Glutamyl-tRNA reductase.